The sequence spans 1293 residues: Phosphoribosylformylglycinamidine synthase (1293 aa).

Residues 305-316 (GAATGSGGEIRD) and A676 each bind ATP. Positions 677, 716, 720, and 884 each coordinate Mg(2+). ATP is bound at residue S886. The region spanning 1040–1293 (MAILREQGVN…MFRNARVKLG (254 aa)) is the Glutamine amidotransferase type-1 domain. C1133 (nucleophile) is an active-site residue. Residues H1258 and E1260 contribute to the active site.

In the N-terminal section; belongs to the FGAMS family. Monomer.

The protein localises to the cytoplasm. It carries out the reaction N(2)-formyl-N(1)-(5-phospho-beta-D-ribosyl)glycinamide + L-glutamine + ATP + H2O = 2-formamido-N(1)-(5-O-phospho-beta-D-ribosyl)acetamidine + L-glutamate + ADP + phosphate + H(+). Its pathway is purine metabolism; IMP biosynthesis via de novo pathway; 5-amino-1-(5-phospho-D-ribosyl)imidazole from N(2)-formyl-N(1)-(5-phospho-D-ribosyl)glycinamide: step 1/2. Its function is as follows. Phosphoribosylformylglycinamidine synthase involved in the purines biosynthetic pathway. Catalyzes the ATP-dependent conversion of formylglycinamide ribonucleotide (FGAR) and glutamine to yield formylglycinamidine ribonucleotide (FGAM) and glutamate. This Shewanella denitrificans (strain OS217 / ATCC BAA-1090 / DSM 15013) protein is Phosphoribosylformylglycinamidine synthase.